We begin with the raw amino-acid sequence, 179 residues long: TPD1 protein homolog 1 (179 aa).

Residues 1–30 (MRMEHIYKFQHWLFFIGLGVLLSLSLSVKA) form the signal peptide.

In Arabidopsis thaliana (Mouse-ear cress), this protein is TPD1 protein homolog 1.